Consider the following 420-residue polypeptide: Light-independent protochlorophyllide reductase subunit N (420 aa).

Residues Cys21, Cys46, and Cys103 each coordinate [4Fe-4S] cluster.

The protein belongs to the BchN/ChlN family. As to quaternary structure, protochlorophyllide reductase is composed of three subunits; BchL, BchN and BchB. Forms a heterotetramer of two BchB and two BchN subunits. [4Fe-4S] cluster is required as a cofactor.

The enzyme catalyses chlorophyllide a + oxidized 2[4Fe-4S]-[ferredoxin] + 2 ADP + 2 phosphate = protochlorophyllide a + reduced 2[4Fe-4S]-[ferredoxin] + 2 ATP + 2 H2O. The protein operates within porphyrin-containing compound metabolism; bacteriochlorophyll biosynthesis (light-independent). In terms of biological role, component of the dark-operative protochlorophyllide reductase (DPOR) that uses Mg-ATP and reduced ferredoxin to reduce ring D of protochlorophyllide (Pchlide) to form chlorophyllide a (Chlide). This reaction is light-independent. The NB-protein (BchN-BchB) is the catalytic component of the complex. The sequence is that of Light-independent protochlorophyllide reductase subunit N from Chlorobium luteolum (strain DSM 273 / BCRC 81028 / 2530) (Pelodictyon luteolum).